We begin with the raw amino-acid sequence, 495 residues long: WD repeat-containing protein 37 (495 aa).

2 stretches are compositionally biased toward polar residues: residues 1-13 (MPTESASCSTARQ) and 22-31 (SLSIRRTNSS). The segment at 1–50 (MPTESASCSTARQTKQKRKSHSLSIRRTNSSEQERTGLPRDMLEGQDSKL) is disordered. Residues 32–47 (EQERTGLPRDMLEGQD) are compositionally biased toward basic and acidic residues. WD repeat units lie at residues 154–194 (GHRD…CLVK) and 197–236 (GHVGSVNSIKFHPSEQLALTASGDQTAHIWRYAVQLPTPQ). Residues 237 to 266 (PVADTSQISGEDEVECSDKDEPDLDGDVSS) form a disordered region. Over residues 246–264 (GEDEVECSDKDEPDLDGDV) the composition is skewed to acidic residues. WD repeat units lie at residues 280-319 (SHQGVVIAADWLVGGKQAVTASWDRTANLYDVETSELVHS), 322-361 (GHDQELTHCCTHPTQRLVVTSSRDTTFRLWDFRDPSIHSV), 366-404 (GHTDTVTSAVFTVGDNVVSGSDDRTVKVWDLKNMRSPIA), 407-446 (RTDSAINRINVCVGQKIIALPHDNRQVRLFDMSGVRLARL), and 453-494 (GHRR…LLQE).

In terms of assembly, forms homodimers. Interacts with PACS1. Interacts with PACS2.

The protein resides in the cytoplasm. It is found in the nucleus. In terms of biological role, required for normal ER Ca2+ handling in lymphocytes. Together with PACS1, it plays an essential role in stabilizing peripheral lymphocyte populations. This Pongo abelii (Sumatran orangutan) protein is WD repeat-containing protein 37 (WDR37).